The following is a 1512-amino-acid chain: ATP-dependent permease YOR1 (1512 aa).

Residues 1 to 68 (MSPLLPTHWG…KGMKETEDGG (68 aa)) are disordered. Residues 13 to 29 (APQNEPTLPSPSHSVST) show a composition bias toward polar residues. Positions 31 to 65 (VGDEEKLRRSEGSDGEDRINLDSNKYDVKGMKETE) are enriched in basic and acidic residues. The next 5 helical transmembrane spans lie at 229–249 (ASLA…AGFI), 288–308 (GPGI…SLGM), 363–385 (FAAG…IIIL), 475–495 (GMTA…FITY), and 507–527 (IFTV…WPMT). The region spanning 246 to 533 (AGFIKVFGDT…WPMTLSSTAD (288 aa)) is the ABC transmembrane type-1 1 domain. Residues 594-656 (VLNGGKPGGP…SAPGIDEEIS (63 aa)) form a disordered region. Low complexity predominate over residues 619-643 (AEEIQAETAAGQPGAGEASAEGQGQ). The ABC transporter 1 domain occupies 651–871 (IDEEISEKKE…NGAFAKLIKE (221 aa)). Position 683-690 (683-690 (GAIGSGKS)) interacts with ATP. 4 helical membrane passes run 937-957 (GVFM…FYVI), 974-994 (NGFY…ALFF), 1067-1087 (VILL…VSLL), and 1167-1187 (FLGS…SSVS). One can recognise an ABC transmembrane type-1 2 domain in the interval 943-1217 (LLFFCIVVAQ…LVRQIAEVEN (275 aa)). The ABC transporter 2 domain occupies 1255–1496 (IEFKDVRMRY…GGIFTEMCSK (242 aa)). 1289 to 1296 (GRTGAGKS) serves as a coordination point for ATP.

Belongs to the ABC transporter superfamily. ABCC family. Conjugate transporter (TC 3.A.1.208) subfamily.

Its subcellular location is the extracellular vesicle membrane. It localises to the secreted. Its function is as follows. Transmembrane transporter. May play a role in the packaging or formation of extracellular vesicles (EVs), and in the export of virulence factors from EVs. Required for efficient non-lytic exocytosis from host macrophages, the process by which the yeast escapes host macrophages with both host cell and pathogen remaining viable. This chain is ATP-dependent permease YOR1, found in Cryptococcus neoformans var. grubii serotype A (strain H99 / ATCC 208821 / CBS 10515 / FGSC 9487) (Filobasidiella neoformans var. grubii).